The sequence spans 213 residues: Ribosomal RNA small subunit methyltransferase G (213 aa).

S-adenosyl-L-methionine is bound by residues Gly-75, Phe-80, 128–129 (IE), and Arg-144.

This sequence belongs to the methyltransferase superfamily. RNA methyltransferase RsmG family.

The protein resides in the cytoplasm. It carries out the reaction guanosine(527) in 16S rRNA + S-adenosyl-L-methionine = N(7)-methylguanosine(527) in 16S rRNA + S-adenosyl-L-homocysteine. Its function is as follows. Specifically methylates the N7 position of guanine in position 527 of 16S rRNA. The protein is Ribosomal RNA small subunit methyltransferase G of Brucella anthropi (strain ATCC 49188 / DSM 6882 / CCUG 24695 / JCM 21032 / LMG 3331 / NBRC 15819 / NCTC 12168 / Alc 37) (Ochrobactrum anthropi).